The primary structure comprises 123 residues: NADH-quinone oxidoreductase subunit A (123 aa).

3 helical membrane-spanning segments follow: residues 11 to 31 (YLPI…IMIL), 64 to 84 (ICFY…AFLV), and 93 to 113 (IGKI…IGFI).

It belongs to the complex I subunit 3 family. As to quaternary structure, NDH-1 is composed of 14 different subunits. Subunits NuoA, H, J, K, L, M, N constitute the membrane sector of the complex.

It is found in the cell inner membrane. It catalyses the reaction a quinone + NADH + 5 H(+)(in) = a quinol + NAD(+) + 4 H(+)(out). Its function is as follows. NDH-1 shuttles electrons from NADH, via FMN and iron-sulfur (Fe-S) centers, to quinones in the respiratory chain. The immediate electron acceptor for the enzyme in this species is believed to be ubiquinone. Couples the redox reaction to proton translocation (for every two electrons transferred, four hydrogen ions are translocated across the cytoplasmic membrane), and thus conserves the redox energy in a proton gradient. In Rickettsia conorii (strain ATCC VR-613 / Malish 7), this protein is NADH-quinone oxidoreductase subunit A.